Here is a 323-residue protein sequence, read N- to C-terminus: MKTTFLDFEQQIAELESKIEELRFVQDESSVDISDEIKMLAEKSLQLTKDVYANLTPWQVSQVARHPQRPYTLDYVGALFTDFHELHGDRTFADDQSIIGGLARFENQPCMVIGHQKGRDTKERALRNFGMSRPEGYRKAMRLMRLAEKFGIPVFTFVDTPGAFPGIDAEERNQSEAIGRNLYVQAELEVPIIATIIGEGGSGGALAIAMGDAVLMLQNSTYSVISPEGCASILWKTADKASEAAEQLGLTAQRLKALGLIDKIVAEPIGGAHRDYDGMMSNMRKALAESLKTFDGMKVDALLDRRHERLMSYGKFKEITAKS.

A CoA carboxyltransferase C-terminal domain is found at 40 to 293 (LAEKSLQLTK…RKALAESLKT (254 aa)).

Belongs to the AccA family. As to quaternary structure, acetyl-CoA carboxylase is a heterohexamer composed of biotin carboxyl carrier protein (AccB), biotin carboxylase (AccC) and two subunits each of ACCase subunit alpha (AccA) and ACCase subunit beta (AccD).

The protein localises to the cytoplasm. It catalyses the reaction N(6)-carboxybiotinyl-L-lysyl-[protein] + acetyl-CoA = N(6)-biotinyl-L-lysyl-[protein] + malonyl-CoA. It functions in the pathway lipid metabolism; malonyl-CoA biosynthesis; malonyl-CoA from acetyl-CoA: step 1/1. In terms of biological role, component of the acetyl coenzyme A carboxylase (ACC) complex. First, biotin carboxylase catalyzes the carboxylation of biotin on its carrier protein (BCCP) and then the CO(2) group is transferred by the carboxyltransferase to acetyl-CoA to form malonyl-CoA. The polypeptide is Acetyl-coenzyme A carboxylase carboxyl transferase subunit alpha (Polynucleobacter necessarius subsp. necessarius (strain STIR1)).